Reading from the N-terminus, the 180-residue chain is Ribosome maturation factor RimM (180 aa).

Positions 97 to 169 (PGELSWDFFV…IITVDLPEGL (73 aa)) constitute a PRC barrel domain.

It belongs to the RimM family. In terms of assembly, binds ribosomal protein uS19.

Its subcellular location is the cytoplasm. An accessory protein needed during the final step in the assembly of 30S ribosomal subunit, possibly for assembly of the head region. Essential for efficient processing of 16S rRNA. May be needed both before and after RbfA during the maturation of 16S rRNA. It has affinity for free ribosomal 30S subunits but not for 70S ribosomes. The sequence is that of Ribosome maturation factor RimM from Bacteroides fragilis (strain YCH46).